Consider the following 275-residue polypeptide: Ribosomal RNA small subunit methyltransferase A (275 aa).

Residues Asn19, Leu21, Gly46, Glu71, Asp94, and Asn117 each coordinate S-adenosyl-L-methionine.

It belongs to the class I-like SAM-binding methyltransferase superfamily. rRNA adenine N(6)-methyltransferase family. RsmA subfamily.

The protein resides in the cytoplasm. It carries out the reaction adenosine(1518)/adenosine(1519) in 16S rRNA + 4 S-adenosyl-L-methionine = N(6)-dimethyladenosine(1518)/N(6)-dimethyladenosine(1519) in 16S rRNA + 4 S-adenosyl-L-homocysteine + 4 H(+). Specifically dimethylates two adjacent adenosines (A1518 and A1519) in the loop of a conserved hairpin near the 3'-end of 16S rRNA in the 30S particle. May play a critical role in biogenesis of 30S subunits. The sequence is that of Ribosomal RNA small subunit methyltransferase A from Burkholderia pseudomallei (strain 668).